Reading from the N-terminus, the 395-residue chain is Outer membrane protein assembly factor BamB (395 aa).

The signal sequence occupies residues methionine 1–alanine 20. Residue cysteine 21 is the site of N-palmitoyl cysteine attachment. The S-diacylglycerol cysteine moiety is linked to residue cysteine 21.

This sequence belongs to the BamB family. As to quaternary structure, part of the Bam complex.

Its subcellular location is the cell outer membrane. Its function is as follows. Part of the outer membrane protein assembly complex, which is involved in assembly and insertion of beta-barrel proteins into the outer membrane. The polypeptide is Outer membrane protein assembly factor BamB (Shewanella oneidensis (strain ATCC 700550 / JCM 31522 / CIP 106686 / LMG 19005 / NCIMB 14063 / MR-1)).